The following is a 145-amino-acid chain: Large ribosomal subunit protein uL11 (145 aa).

Belongs to the universal ribosomal protein uL11 family. In terms of assembly, part of the ribosomal stalk of the 50S ribosomal subunit. Interacts with L10 and the large rRNA to form the base of the stalk. L10 forms an elongated spine to which L12 dimers bind in a sequential fashion forming a multimeric L10(L12)X complex. In terms of processing, one or more lysine residues are methylated.

Functionally, forms part of the ribosomal stalk which helps the ribosome interact with GTP-bound translation factors. This chain is Large ribosomal subunit protein uL11, found in Aquifex aeolicus (strain VF5).